Here is a 202-residue protein sequence, read N- to C-terminus: MRPGLQPSLGLTSSSLPDDALEVGRILDAWGVKGWVKILPHSTDPEALFSAKTWYLQTPDVKFRPGFSLFSGTVSLKVDEAKIHSGAVVAKFSGLDDRDAAEALRGARIFLSRSSFPAASADEYYWVDLIGLNVLNREGVALGCVRDLMATGPHSVLCVEYASTQEDGTSATAERMIPFVAAYVDKVDIAGKCITVDWQPDY.

Residues 121–202 form the PRC barrel domain; it reads ADEYYWVDLI…CITVDWQPDY (82 aa).

This sequence belongs to the RimM family. In terms of assembly, binds ribosomal protein uS19.

It localises to the cytoplasm. An accessory protein needed during the final step in the assembly of 30S ribosomal subunit, possibly for assembly of the head region. Essential for efficient processing of 16S rRNA. May be needed both before and after RbfA during the maturation of 16S rRNA. It has affinity for free ribosomal 30S subunits but not for 70S ribosomes. In Polaromonas naphthalenivorans (strain CJ2), this protein is Ribosome maturation factor RimM.